A 79-amino-acid polypeptide reads, in one-letter code: MARAVVHVMLRAEILDPQGQAIAGALGRLGHTGISDVRQGKRFELEIDDTVDDSELAMIAESLLANTVIEDWTITRESQ.

Belongs to the PurS family. In terms of assembly, homodimer. Part of the FGAM synthase complex composed of 1 PurL, 1 PurQ and 2 PurS subunits.

It is found in the cytoplasm. The catalysed reaction is N(2)-formyl-N(1)-(5-phospho-beta-D-ribosyl)glycinamide + L-glutamine + ATP + H2O = 2-formamido-N(1)-(5-O-phospho-beta-D-ribosyl)acetamidine + L-glutamate + ADP + phosphate + H(+). The protein operates within purine metabolism; IMP biosynthesis via de novo pathway; 5-amino-1-(5-phospho-D-ribosyl)imidazole from N(2)-formyl-N(1)-(5-phospho-D-ribosyl)glycinamide: step 1/2. In terms of biological role, part of the phosphoribosylformylglycinamidine synthase complex involved in the purines biosynthetic pathway. Catalyzes the ATP-dependent conversion of formylglycinamide ribonucleotide (FGAR) and glutamine to yield formylglycinamidine ribonucleotide (FGAM) and glutamate. The FGAM synthase complex is composed of three subunits. PurQ produces an ammonia molecule by converting glutamine to glutamate. PurL transfers the ammonia molecule to FGAR to form FGAM in an ATP-dependent manner. PurS interacts with PurQ and PurL and is thought to assist in the transfer of the ammonia molecule from PurQ to PurL. This is Phosphoribosylformylglycinamidine synthase subunit PurS from Mycobacterium leprae (strain TN).